Consider the following 817-residue polypeptide: Kinesin-like protein 2 (817 aa).

The tract at residues 1-155 (MEEEGHKSLT…YNDEKSVNAS (155 aa)) is disordered. A compositionally biased stretch (low complexity) spans 8–23 (SLTSHLPQSSSSLSQS). Residues 39–60 (IKTNSSSSNILKPRLSLQNEVN) show a composition bias toward polar residues. Residues 76–86 (SLASVKSSSLA) show a composition bias toward low complexity. Positions 106-116 (PISSRSVSASS) are enriched in polar residues. Over residues 122–132 (ASAVSSSLNSS) the composition is skewed to low complexity. Residues 155 to 242 (SALRTTEDRL…VSQKGMESLE (88 aa)) adopt a coiled-coil conformation. The ATP site is built by Asn473, Arg475, Arg479, Glu543, Gly566, Ser567, Gly568, Lys569, Thr570, and Thr778. A Kinesin motor domain is found at 473 to 807 (NIRVFCRVRP…LRFATKVNNT (335 aa)).

It belongs to the TRAFAC class myosin-kinesin ATPase superfamily. Kinesin family. NCD subfamily.

Its subcellular location is the cytoplasm. The protein resides in the cytoskeleton. It localises to the spindle. It is found in the nucleus. It catalyses the reaction ATP + H2O = ADP + phosphate + H(+). The catalysed reaction is ATP + H2O + a kinesin associated with a microtubule at position (n) = ADP + phosphate + a kinesin associated with a microtubule at position (n-1, toward the minus end).. Its function is as follows. Minus end-directed microtubule (MT) motor that is involved in spindle microtubule shortening, kinetochore capture, and polarization of cytoplasmic microtubules. During mitosis, promotes spindle microtubule shortening by depolymerization. During metaphase, involved in the recapture of kinetochores displaced from the spindle and their transport towards the spindle pole body; promotes transport both by microtubule end-on pulling and by lateral sliding along the side of the microtubule. During interphase, required for the polarization of cytoplasmic microtubules where it orients the microtubule plus ends toward the cell ends and the minus ends toward the cell center. Required for karyogamy. The polypeptide is Kinesin-like protein 2 (Schizosaccharomyces pombe (strain 972 / ATCC 24843) (Fission yeast)).